Here is a 130-residue protein sequence, read N- to C-terminus: Small ribosomal subunit protein uS11 (130 aa).

This sequence belongs to the universal ribosomal protein uS11 family. As to quaternary structure, part of the 30S ribosomal subunit. Interacts with proteins S7 and S18. Binds to IF-3.

In terms of biological role, located on the platform of the 30S subunit, it bridges several disparate RNA helices of the 16S rRNA. Forms part of the Shine-Dalgarno cleft in the 70S ribosome. The sequence is that of Small ribosomal subunit protein uS11 from Nitrobacter hamburgensis (strain DSM 10229 / NCIMB 13809 / X14).